The following is a 441-amino-acid chain: Glutamate--tRNA ligase 2 (441 aa).

The short motif at 6–16 (PSPTGDMHIGN) is the 'HIGH' region element. Residues 231–235 (KMSKR) carry the 'KMSKS' region motif. Residue Lys-234 participates in ATP binding.

This sequence belongs to the class-I aminoacyl-tRNA synthetase family. Glutamate--tRNA ligase type 1 subfamily. Monomer.

The protein localises to the cytoplasm. It catalyses the reaction tRNA(Glu) + L-glutamate + ATP = L-glutamyl-tRNA(Glu) + AMP + diphosphate. Its function is as follows. Catalyzes the attachment of glutamate to tRNA(Glu) in a two-step reaction: glutamate is first activated by ATP to form Glu-AMP and then transferred to the acceptor end of tRNA(Glu). In Helicobacter hepaticus (strain ATCC 51449 / 3B1), this protein is Glutamate--tRNA ligase 2.